Consider the following 415-residue polypeptide: Serine hydroxymethyltransferase (415 aa).

Residues Leu122 and 126 to 128 (GHL) each bind (6S)-5,6,7,8-tetrahydrofolate. Lys230 carries the N6-(pyridoxal phosphate)lysine modification.

It belongs to the SHMT family. In terms of assembly, homodimer. It depends on pyridoxal 5'-phosphate as a cofactor.

Its subcellular location is the cytoplasm. It catalyses the reaction (6R)-5,10-methylene-5,6,7,8-tetrahydrofolate + glycine + H2O = (6S)-5,6,7,8-tetrahydrofolate + L-serine. The protein operates within one-carbon metabolism; tetrahydrofolate interconversion. It functions in the pathway amino-acid biosynthesis; glycine biosynthesis; glycine from L-serine: step 1/1. Functionally, catalyzes the reversible interconversion of serine and glycine with tetrahydrofolate (THF) serving as the one-carbon carrier. This reaction serves as the major source of one-carbon groups required for the biosynthesis of purines, thymidylate, methionine, and other important biomolecules. Also exhibits THF-independent aldolase activity toward beta-hydroxyamino acids, producing glycine and aldehydes, via a retro-aldol mechanism. This chain is Serine hydroxymethyltransferase, found in Ralstonia pickettii (strain 12J).